A 207-amino-acid chain; its full sequence is Chloramphenicol acetyltransferase (207 aa).

His186 (proton acceptor) is an active-site residue.

The protein belongs to the chloramphenicol acetyltransferase family. In terms of assembly, homotrimer.

It catalyses the reaction chloramphenicol + acetyl-CoA = chloramphenicol 3-acetate + CoA. Its function is as follows. This enzyme is an effector of chloramphenicol resistance in bacteria. In Clostridium perfringens, this protein is Chloramphenicol acetyltransferase (catP).